The sequence spans 44 residues: Protein PsbN (44 aa).

The helical transmembrane segment at 6-26 (FFFTFFLWFLLLSATGYSIYV) threads the bilayer.

Belongs to the PsbN family.

It is found in the plastid. The protein resides in the chloroplast thylakoid membrane. Its function is as follows. May play a role in photosystem I and II biogenesis. The polypeptide is Protein PsbN (Tetradesmus obliquus (Green alga)).